A 672-amino-acid polypeptide reads, in one-letter code: MSEPKNILLTVDGELREVTHGTTGLDLFREKPTTAVMRVDGLLWDLAREIPAGASVESVDITEPEGLEVLRHSTAHVMAQAVQQLRPGAKLGIGPYITDGFYFDFDVDDPFTPEDLKQISSLMQKIVKSGQAFRRRVVDEETARAEMADEPYKLELLGKKDAADTAGEGASVEVGAGEITIYDNVDRKTGDAVWCDLCRGPHLPSTKLIGNGFALTRSAAAYWLGNEKNKQLQRIYGTAWASKDDLKAYQERLAEAERRDHRKLGAELDLFSFPDELGSGLPVFHPRGGIIRKEMEDYSRRRHTEAGYEFVYTPHITKQHLYEVSGHLDWYANGMFPPMHIDEVRDPETGEITRQGQNYYLKPMNCPMHNLIYRSRGRSYRELPLRLFEFGSVYRYEKSGVVHGLTRVRGMTQDDAHIYCTREQMKEELTTTLNFVLDLLKDYGLNDFHLELSTKDPEKFVGSDEIWEEATRTLAEVAEASGLQLVPDPGGAAFYGPKISVQARDAIGRTWQMSTIQLDFNLPERFDLEYQAADGTRQRPVMIHRALFGSIERFLGVLTEHYAGAFPAWLAPEQVVAIPVAEAFNDYLDDVVAKLRAEGIRARLDDSSDRFPKKIRTAAKEKAPFVLIAGGEDREAGAVSFRFRDGTQDNGVPVEEAIERIVKAVREREVTP.

A TGS domain is found at 2 to 60; sequence SEPKNILLTVDGELREVTHGTTGLDLFREKPTTAVMRVDGLLWDLAREIPAGASVESVD. Residues 260 to 567 form a catalytic region; sequence DHRKLGAELD…LTEHYAGAFP (308 aa). Zn(2+) contacts are provided by C366, H417, and H544.

It belongs to the class-II aminoacyl-tRNA synthetase family. Homodimer. Zn(2+) is required as a cofactor.

Its subcellular location is the cytoplasm. It carries out the reaction tRNA(Thr) + L-threonine + ATP = L-threonyl-tRNA(Thr) + AMP + diphosphate + H(+). Functionally, catalyzes the attachment of threonine to tRNA(Thr) in a two-step reaction: L-threonine is first activated by ATP to form Thr-AMP and then transferred to the acceptor end of tRNA(Thr). Also edits incorrectly charged L-seryl-tRNA(Thr). This Micrococcus luteus (strain ATCC 4698 / DSM 20030 / JCM 1464 / CCM 169 / CCUG 5858 / IAM 1056 / NBRC 3333 / NCIMB 9278 / NCTC 2665 / VKM Ac-2230) (Micrococcus lysodeikticus) protein is Threonine--tRNA ligase.